We begin with the raw amino-acid sequence, 348 residues long: MSSEDWDLFAVVRSCSSSVSTTNSCAGHEDDIGNCKQQQDPPPPPLFQASSSCNELQDSCKPFLPVTTTTTTTWSPPPLLPPPKASSPSPNILLKQEQVLLESQDQKPPLSVRVFPPSTSSSVFVFRGQRDQLLQQQSQPPLRSRKRKNQQKRTICHVTQENLSSDLWAWRKYGQKPIKGSPYPRNYYRCSSSKGCLARKQVERSNLDPNIFIVTYTGEHTHPRPTHRNSLAGSTRNKSQPVNPVPKPDTSPLSDTVKEEIHLSPTTPLKGNDDVQETNGDEDMVGQEVNMEEEEEEEEVEEDDEEEEDDDDVDDLLIPNLAVRDRDDLFFAGSFPSWSAGSAGDGGG.

Disordered stretches follow at residues 19-52 (VSTTNSCAGHEDDIGNCKQQQDPPPPPLFQASSS), 67-90 (TTTTTTTWSPPPLLPPPKASSPSP), 133-153 (LLQQQSQPPLRSRKRKNQQKR), and 218-320 (GEHT…LIPN). A compositionally biased stretch (pro residues) spans 75–85 (SPPPLLPPPKA). A compositionally biased stretch (low complexity) spans 133 to 142 (LLQQQSQPPL). Basic residues predominate over residues 143–153 (RSRKRKNQQKR). Positions 159 to 225 (TQENLSSDLW…YTGEHTHPRP (67 aa)) form a DNA-binding region, WRKY. Residues 228-242 (RNSLAGSTRNKSQPV) show a composition bias toward polar residues. The span at 274–315 (DVQETNGDEDMVGQEVNMEEEEEEEEVEEDDEEEEDDDDVDD) shows a compositional bias: acidic residues.

Belongs to the WRKY group II-e family.

It localises to the nucleus. Functionally, transcription factor. Interacts specifically with the W box (5'-(T)TGAC[CT]-3'), a frequently occurring elicitor-responsive cis-acting element. This Arabidopsis thaliana (Mouse-ear cress) protein is Probable WRKY transcription factor 27 (WRKY27).